Reading from the N-terminus, the 218-residue chain is Thiamine-phosphate synthase (218 aa).

4-amino-2-methyl-5-(diphosphooxymethyl)pyrimidine is bound by residues 43 to 47 (QLRMK) and N75. Residues D76 and D95 each contribute to the Mg(2+) site. T114 serves as a coordination point for 4-amino-2-methyl-5-(diphosphooxymethyl)pyrimidine. 140 to 142 (TST) contributes to the 2-[(2R,5Z)-2-carboxy-4-methylthiazol-5(2H)-ylidene]ethyl phosphate binding site. K143 contacts 4-amino-2-methyl-5-(diphosphooxymethyl)pyrimidine. 2-[(2R,5Z)-2-carboxy-4-methylthiazol-5(2H)-ylidene]ethyl phosphate-binding positions include G171 and 191 to 192 (VS).

This sequence belongs to the thiamine-phosphate synthase family. The cofactor is Mg(2+).

It catalyses the reaction 2-[(2R,5Z)-2-carboxy-4-methylthiazol-5(2H)-ylidene]ethyl phosphate + 4-amino-2-methyl-5-(diphosphooxymethyl)pyrimidine + 2 H(+) = thiamine phosphate + CO2 + diphosphate. The catalysed reaction is 2-(2-carboxy-4-methylthiazol-5-yl)ethyl phosphate + 4-amino-2-methyl-5-(diphosphooxymethyl)pyrimidine + 2 H(+) = thiamine phosphate + CO2 + diphosphate. The enzyme catalyses 4-methyl-5-(2-phosphooxyethyl)-thiazole + 4-amino-2-methyl-5-(diphosphooxymethyl)pyrimidine + H(+) = thiamine phosphate + diphosphate. It participates in cofactor biosynthesis; thiamine diphosphate biosynthesis; thiamine phosphate from 4-amino-2-methyl-5-diphosphomethylpyrimidine and 4-methyl-5-(2-phosphoethyl)-thiazole: step 1/1. Its function is as follows. Condenses 4-methyl-5-(beta-hydroxyethyl)thiazole monophosphate (THZ-P) and 2-methyl-4-amino-5-hydroxymethyl pyrimidine pyrophosphate (HMP-PP) to form thiamine monophosphate (TMP). The sequence is that of Thiamine-phosphate synthase from Myxococcus xanthus (strain DK1622).